The following is a 993-amino-acid chain: uncharacterized protein (993 aa).

A signal peptide spans 1 to 28 (MKLFPRSILITLVLSFALNLGIVTKIHA). 7 consecutive transmembrane segments (helical) span residues 331-351 (IVTA…LLAG), 359-379 (YINF…INIT), 392-412 (MIQW…SWVM), 494-514 (MLVS…AFMV), 521-541 (MISI…FLFA), 554-574 (MISF…MFSV), and 699-719 (IKNI…MYNF). The segment at 779–904 (GQGGGASDLE…EKVDSTSKGT (126 aa)) is disordered. Residues 805–829 (TSAPAVTTPTASSSVASSSPKTVSS) are compositionally biased toward low complexity. A compositionally biased stretch (pro residues) spans 838-850 (PPAPTEAVSPPPA). Positions 866-879 (IIRDNNQESKKEID) are enriched in basic and acidic residues.

It belongs to the TrbL/VirB6 family.

Its subcellular location is the cell membrane. This is an uncharacterized protein from Rickettsia conorii (strain ATCC VR-613 / Malish 7).